The sequence spans 510 residues: UDP-N-acetylmuramoyl-tripeptide--D-alanyl-D-alanine ligase (510 aa).

136-142 (GSSGKTS) contributes to the ATP binding site.

Belongs to the MurCDEF family. MurF subfamily.

It localises to the cytoplasm. The enzyme catalyses D-alanyl-D-alanine + UDP-N-acetyl-alpha-D-muramoyl-L-alanyl-gamma-D-glutamyl-meso-2,6-diaminopimelate + ATP = UDP-N-acetyl-alpha-D-muramoyl-L-alanyl-gamma-D-glutamyl-meso-2,6-diaminopimeloyl-D-alanyl-D-alanine + ADP + phosphate + H(+). It functions in the pathway cell wall biogenesis; peptidoglycan biosynthesis. Involved in cell wall formation. Catalyzes the final step in the synthesis of UDP-N-acetylmuramoyl-pentapeptide, the precursor of murein. The chain is UDP-N-acetylmuramoyl-tripeptide--D-alanyl-D-alanine ligase from Mycobacterium bovis (strain ATCC BAA-935 / AF2122/97).